We begin with the raw amino-acid sequence, 467 residues long: MVHIPSDVTPPRLCVVEKLNGENEYGYNLHAEKGRGQFVGTVDPDSPAERGGLITGDRIFAVNGHSIIGENHKKVVERIKANPNRCEMLVISEEGAKWYNENNVQITLDLPNIERVSPMSKETPVFVPPPPPPTDAMPYLPRLAELNKGTPDQEFGFNLHAERGRGHFIGTVDAGGIGEKAGLEAGQRIVGVNGQLIYPTTGHKEVVALIKKDTMKTTLLVASEDVDKYHKDHNIAYSWDNVERVDTRPVINVETHHHHEEVSVPKSNGYDVPPLNPHSIQVNEEREISKMTTTTRTETITNSNSAYQYKESSTAYDAYATPPVDSNDLMDEVFGRVNLPGVTMSSHTEVLPPTDDISSVSSLSSHRESAVDVPVSHQYVPSYATESHQKHEQHSQTHHHHHQHQQPSPLSNGSSHGYAASSTSGYDDDDIYHLSAREARERLRMKNRKHHLHEMSLNEKYQLVSNM.

PDZ domains are found at residues R12–E94 and L143–D225. The interval M344–D429 is disordered. Over residues P407–G425 the composition is skewed to polar residues.

As to quaternary structure, interacts (via PDZ 2 domain) with aat-6 (via PDZ-binding motif); the interaction sequesters aat-6 to the apical cell membrane of intestinal cells. Phosphorylated. In terms of tissue distribution, expressed in the excretory canal and intestine. Expressed on the apical cell membrane of intestinal cells (at protein level).

The protein localises to the cell projection. Its subcellular location is the microvillus membrane. It is found in the apical cell membrane. Its function is as follows. Scaffold protein that connects plasma membrane proteins with members of the ezrin/moesin/radixin family and thereby helps to link them to the actin cytoskeleton and to regulate their surface expression. Anchors the amino acid transporter protein aat-6 to the apical cell membrane of intestinal cells, particularly in older animals, in order to maintain amino acid homeostasis. May play a role in promoting fertility. The polypeptide is Na(+)/H(+) exchange regulatory cofactor-like protein nrfl-1 (Caenorhabditis elegans).